Here is a 118-residue protein sequence, read N- to C-terminus: uncharacterized protein (118 aa).

An HTH hxlR-type domain is found at 6–104; it reads CGFEVTKEVI…WGGYYAEQEY (99 aa).

This is an uncharacterized protein from Bacillus subtilis (strain 168).